The sequence spans 511 residues: Aprataxin and PNK-like factor (511 aa).

In terms of domain architecture, FHA-like spans methionine 1–glutamate 108. At serine 116 the chain carries Phosphoserine; by ATM. Residue serine 149 is modified to Phosphoserine. Residues arginine 182–leucine 191 carry the KBM motif. The interval lysine 223–glutamate 370 is disordered. Composition is skewed to polar residues over residues glutamine 225–glutamine 249 and serine 263–arginine 293. The segment covering valine 304–proline 315 has biased composition (basic residues). Residues cysteine 324 to histidine 344 show a composition bias toward polar residues. The span at serine 345 to glutamate 355 shows a compositional bias: low complexity. A glycoprotein contacts are provided by arginine 376, tyrosine 381, tyrosine 386, and arginine 387. The PBZ-type 1 zinc finger occupies threonine 377–histidine 398. A flexible linker region spans residues glycine 406–aspartate 416. The PBZ-type 2 zinc-finger motif lies at proline 419 to histidine 440. A glycoprotein-binding residues include tyrosine 423, tyrosine 428, and arginine 429. Positions leucine 449–valine 497 are disordered. The span at phenylalanine 468 to valine 497 shows a compositional bias: acidic residues. The NAP1L motif signature appears at tyrosine 476 to leucine 500. Positions proline 487–lysine 511 form a coiled coil.

The protein belongs to the APLF family. Interacts with LIG4. Interacts with PARP1. Interacts with XRCC4. Interacts (via KBM motif) with XRCC5 and XRCC6; promoting recruitment to DNA damage sites. Interacts with XRCC1. Interacts (via C-terminal disordered region) with histones; interacts with histone H2A, H2B and H3-H4. Poly-ADP-ribosylated. In addition to binding non covalently poly-ADP-ribose via its PBZ-type zinc fingers, the protein is also covalently poly-ADP-ribosylated by PARP1. Post-translationally, phosphorylated in an ATM-dependent manner upon double-strand DNA break.

The protein localises to the nucleus. Its subcellular location is the chromosome. It localises to the cytoplasm. The protein resides in the cytosol. Histone chaperone involved in single-strand and double-strand DNA break repair. Recruited to sites of DNA damage through interaction with branched poly-ADP-ribose chains, a polymeric post-translational modification synthesized transiently at sites of chromosomal damage to accelerate DNA strand break repair reactions. Following recruitment to DNA damage sites, acts as a histone chaperone that mediates histone eviction during DNA repair and promotes recruitment of histone variant MACROH2A1. Also has a nuclease activity: displays apurinic-apyrimidinic (AP) endonuclease and 3'-5' exonuclease activities in vitro. Also able to introduce nicks at hydroxyuracil and other types of pyrimidine base damage. Together with PARP3, promotes the retention of the LIG4-XRCC4 complex on chromatin and accelerate DNA ligation during non-homologous end-joining (NHEJ). Also acts as a negative regulator of cell pluripotency by promoting histone exchange. Required for the embryo implantation during the epithelial to mesenchymal transition in females. This chain is Aprataxin and PNK-like factor, found in Homo sapiens (Human).